We begin with the raw amino-acid sequence, 574 residues long: Glucose-6-phosphate 1-dehydrogenase, chloroplastic (574 aa).

NADP(+) is bound by residues 93 to 100 (GASGDLAK) and Arg127. A disulfide bridge links Cys145 with Cys153. Lys230 lines the NADP(+) pocket. D-glucose 6-phosphate contacts are provided by residues Lys230, 260 to 264 (HYLGK), Glu298, and Asp317. His322 serves as the catalytic Proton acceptor. NADP(+) is bound at residue Lys415. D-glucose 6-phosphate contacts are provided by Lys418 and Lys423. Residues Arg424, Arg428, and Arg457 each coordinate NADP(+). Gln459 serves as a coordination point for D-glucose 6-phosphate. Residues 465-467 (YLK) and Arg550 contribute to the NADP(+) site.

The protein belongs to the glucose-6-phosphate dehydrogenase family. As to quaternary structure, homodimer.

It is found in the plastid. The protein resides in the chloroplast. The enzyme catalyses D-glucose 6-phosphate + NADP(+) = 6-phospho-D-glucono-1,5-lactone + NADPH + H(+). The protein operates within carbohydrate degradation; pentose phosphate pathway; D-ribulose 5-phosphate from D-glucose 6-phosphate (oxidative stage): step 1/3. Its activity is regulated as follows. Regulated by metabolites. Post-translationally inactivated by cysteine-mediated redox modification via the ferredoxin-thioredoxin system in the light and this avoids futile cycles with photosynthetic CO2 fixation. Functionally, catalyzes the rate-limiting step of the oxidative pentose-phosphate pathway, which represents a route for the dissimilation of carbohydrates besides glycolysis. The main function of this enzyme is to provide reducing power (NADPH) and pentose phosphates for fatty acid and nucleic acid synthesis which are involved in membrane synthesis and cell division. This is Glucose-6-phosphate 1-dehydrogenase, chloroplastic (G6PD) from Spinacia oleracea (Spinach).